An 840-amino-acid chain; its full sequence is MLLFSSSSLQLREIFFPRIFSVFVKLNFLNSRGFSSDSAKALAAGISKAIKEGNFNLLDSSVYGSNLQRNETNLVLLSLESEPNSALKYFRWAEISGKDPSFYTIAHVLIRNGMFDVADKVFDEMITNRGKDFNVLGSIRDRSLDADVCKFLMECCCRYGMVDKALEIFVYSTQLGVVIPQDSVYRMLNSLIGSDRVDLIADHFDKLCRGGIEPSGVSAHGFVLDALFCKGEVTKALDFHRLVMERGFRVGIVSCNKVLKGLSVDQIEVASRLLSLVLDCGPAPNVVTFCTLINGFCKRGEMDRAFDLFKVMEQRGIEPDLIAYSTLIDGYFKAGMLGMGHKLFSQALHKGVKLDVVVFSSTIDVYVKSGDLATASVVYKRMLCQGISPNVVTYTILIKGLCQDGRIYEAFGMYGQILKRGMEPSIVTYSSLIDGFCKCGNLRSGFALYEDMIKMGYPPDVVIYGVLVDGLSKQGLMLHAMRFSVKMLGQSIRLNVVVFNSLIDGWCRLNRFDEALKVFRLMGIYGIKPDVATFTTVMRVSIMEGRLEEALFLFFRMFKMGLEPDALAYCTLIDAFCKHMKPTIGLQLFDLMQRNKISADIAVCNVVIHLLFKCHRIEDASKFFNNLIEGKMEPDIVTYNTMICGYCSLRRLDEAERIFELLKVTPFGPNTVTLTILIHVLCKNNDMDGAIRMFSIMAEKGSKPNAVTYGCLMDWFSKSVDIEGSFKLFEEMQEKGISPSIVSYSIIIDGLCKRGRVDEATNIFHQAIDAKLLPDVVAYAILIRGYCKVGRLVEAALLYEHMLRNGVKPDDLLQRALSEYNPPKWLMSKGVWVHDKPMPD.

PPR repeat units lie at residues 98–128 (KDPS…MITN), 145–179 (DADV…GVVI), 180–214 (PQDS…GIEP), 216–250 (GVSA…GFRV), 251–284 (GIVS…GPAP), 285–319 (NVVT…GIEP), 320–354 (DLIA…GVKL), 355–389 (DVVV…GISP), 390–424 (NVVT…GMEP), 425–459 (SIVT…GYPP), 460–494 (DVVI…SIRL), 495–529 (NVVV…GIKP), 530–564 (DVAT…GLEP), 565–599 (DALA…KISA), 600–634 (DIAV…KMEP), 635–669 (DIVT…PFGP), 670–704 (NTVT…GSKP), 705–739 (NAVT…GISP), 740–774 (SIVS…KLLP), and 775–809 (DVVA…GVKP).

This sequence belongs to the PPR family. P subfamily.

In Arabidopsis thaliana (Mouse-ear cress), this protein is Putative pentatricopeptide repeat-containing protein At1g31840.